A 451-amino-acid chain; its full sequence is NADP-specific glutamate dehydrogenase (451 aa).

The active site involves Lys113. Ser252 bears the Phosphoserine mark.

This sequence belongs to the Glu/Leu/Phe/Val dehydrogenases family. In terms of assembly, homohexamer.

The enzyme catalyses L-glutamate + NADP(+) + H2O = 2-oxoglutarate + NH4(+) + NADPH + H(+). The chain is NADP-specific glutamate dehydrogenase (gdh1) from Schizosaccharomyces pombe (strain 972 / ATCC 24843) (Fission yeast).